Consider the following 255-residue polypeptide: Serine/threonine-protein phosphatase PP1 (255 aa).

Mn(2+)-binding residues include Asp2, His4, Asp30, and Asn62. The active-site Proton donor is the His63. Residues His111 and His186 each coordinate Mn(2+).

Belongs to the PPP phosphatase family. PP-1 subfamily. The cofactor is Mn(2+).

It carries out the reaction O-phospho-L-seryl-[protein] + H2O = L-seryl-[protein] + phosphate. The catalysed reaction is O-phospho-L-threonyl-[protein] + H2O = L-threonyl-[protein] + phosphate. The chain is Serine/threonine-protein phosphatase PP1 from Brassica napus (Rape).